The following is a 63-amino-acid chain: Large ribosomal subunit protein uL29 (63 aa).

The protein belongs to the universal ribosomal protein uL29 family.

The polypeptide is Large ribosomal subunit protein uL29 (Azotobacter vinelandii (strain DJ / ATCC BAA-1303)).